We begin with the raw amino-acid sequence, 122 residues long: E3 ubiquitin-protein ligase PPP1R11 (122 aa).

Residues 1–12 (MAEVPGTSSETI) show a composition bias toward polar residues. The disordered stretch occupies residues 1-33 (MAEVPGTSSETITETVQTGTPPPPQQEGRSLTI). Thr20 carries the phosphothreonine modification. An atypical RING finger domain 1 region spans residues 55-65 (HLGRRSSKCCC). Residues 72–122 (QFGESSSESEGDDEEGCGSAHCILGHGRRGHGQREGGGTTVPPSSGGTNPH) form a disordered region. Residues 78-87 (SESEGDDEEG) show a composition bias toward acidic residues. The segment at 88 to 97 (CGSAHCILGH) is atypical RING finger domain 2. Positions 111–122 (TVPPSSGGTNPH) are enriched in low complexity.

It catalyses the reaction S-ubiquitinyl-[E2 ubiquitin-conjugating enzyme]-L-cysteine + [acceptor protein]-L-lysine = [E2 ubiquitin-conjugating enzyme]-L-cysteine + N(6)-ubiquitinyl-[acceptor protein]-L-lysine.. The protein operates within protein modification; protein ubiquitination. In terms of biological role, atypical E3 ubiquitin-protein ligase which ubiquitinates TLR2 at 'Lys-754' leading to its degradation by the proteasome. Inhibitor of protein phosphatase 1. This chain is E3 ubiquitin-protein ligase PPP1R11 (ppp1r11), found in Danio rerio (Zebrafish).